A 345-amino-acid polypeptide reads, in one-letter code: MALIELRHVKKEFSGKAGKVTALKDIDLTVESGDIYGIIGYSGAGKSTLVRLLNGLETPTEGEVEIQGQDIALLPNKELRNFRKKIGMIFQHFNLLWSRTVLENIMLPLEIAGVPKQNRKSRAEELIKLVGLEGRETAYPSQLSGGQKQRVGIARALANNPDILLCDEATSALDPQTTDEVLELLLKINQELNLTVVLITHEMHVIRKICNRVAVMEYGEIVEEGKVIDIFKKPQTEIAKRFIQQEADKNIEETELVVEEMLEQYPNGKIVRLLFHGEQAKLPIISHIVQEYQVEVSIIQGNIQQTKQGAVGSLYIQLLGEEQNILAAIEGLRKLRVETEVIGNE.

An ABC transporter domain is found at 4–243; that stretch reads IELRHVKKEF…PQTEIAKRFI (240 aa). An ATP-binding site is contributed by 40–47; it reads GYSGAGKS.

This sequence belongs to the ABC transporter superfamily. Methionine importer (TC 3.A.1.24) family. In terms of assembly, the complex is composed of two ATP-binding proteins (MetN), two transmembrane proteins (MetI) and a solute-binding protein (MetQ).

It localises to the cell membrane. It carries out the reaction L-methionine(out) + ATP + H2O = L-methionine(in) + ADP + phosphate + H(+). The catalysed reaction is D-methionine(out) + ATP + H2O = D-methionine(in) + ADP + phosphate + H(+). In terms of biological role, part of the ABC transporter complex MetNIQ involved in methionine import. Responsible for energy coupling to the transport system. This Enterococcus faecalis (strain ATCC 700802 / V583) protein is Methionine import ATP-binding protein MetN 2.